The chain runs to 88 residues: Cell division topological specificity factor (88 aa).

This sequence belongs to the MinE family.

Prevents the cell division inhibition by proteins MinC and MinD at internal division sites while permitting inhibition at polar sites. This ensures cell division at the proper site by restricting the formation of a division septum at the midpoint of the long axis of the cell. This is Cell division topological specificity factor from Methylibium petroleiphilum (strain ATCC BAA-1232 / LMG 22953 / PM1).